Consider the following 75-residue polypeptide: Small ribosomal subunit protein bS18 (75 aa).

The protein belongs to the bacterial ribosomal protein bS18 family. As to quaternary structure, part of the 30S ribosomal subunit. Forms a tight heterodimer with protein bS6.

Its function is as follows. Binds as a heterodimer with protein bS6 to the central domain of the 16S rRNA, where it helps stabilize the platform of the 30S subunit. This is Small ribosomal subunit protein bS18 from Shewanella loihica (strain ATCC BAA-1088 / PV-4).